A 702-amino-acid chain; its full sequence is Protein crooked neck (702 aa).

13 HAT repeats span residues 56-88 (DYQQ…WEEQ), 90-122 (QEIQ…MEMK), 124-156 (KQVN…MEEM), 158-189 (ENVA…FELR), 191-222 (KEID…FEES), 224-259 (GFIH…FEEG), 261-295 (KEHD…HEKK), 305-337 (VIVS…LIEA), 339-373 (GDRD…LWIN), 383-419 (EDAE…FEIR), 454-486 (REFE…LENL), 488-522 (GDTD…FEVA), and 524-555 (GETE…FEMG). A Nuclear localization signal motif is present at residues 620–628 (PRRIKKRQK). Residues 670–702 (KDNTVDDPPATAIASEPEPAADAAPADTTDSGD) are disordered. Low complexity predominate over residues 683–702 (ASEPEPAADAAPADTTDSGD).

It belongs to the crooked-neck family. Colocalizes with a complex containing snRNP proteins. In terms of tissue distribution, transcribed in all cells during embryonic development.

It localises to the nucleus speckle. May be involved in pre-mRNA splicing process. Involved in embryonic neurogenesis and cell rearrangement during Malpighian tubule morphogenesis. In Drosophila melanogaster (Fruit fly), this protein is Protein crooked neck (crn).